Here is a 257-residue protein sequence, read N- to C-terminus: MADNQEERPHFPLDEGSIIEGVSDQVIVVVLLSFVAVGSLIYLLLRNDEQNIHPENQDRVRAVREQLQNEQETPAPPRPQFYSDMTCPVCLQQATFPVETNCGHLFCGSCIIAYWRYGTWLGAINCPICRQTVTLLFPLFGATDQEDAQNILQEATGYNRRFSGQPRSLMDRIMDLPTLLRHAFREMFSVGGLFWMFRIRIVLCLLGALLYLVSPLDIIPEALFGILGFLDDLFVLFLLLIYISIMYREVVTQRLYR.

The Lumenal portion of the chain corresponds to 1-24 (MADNQEERPHFPLDEGSIIEGVSD). The helical transmembrane segment at 25–45 (QVIVVVLLSFVAVGSLIYLLL) threads the bilayer. Topologically, residues 46–200 (RNDEQNIHPE…GGLFWMFRIR (155 aa)) are cytoplasmic. The RING-type zinc finger occupies 87 to 130 (CPVCLQQATFPVETNCGHLFCGSCIIAYWRYGTWLGAINCPICR). The helical transmembrane segment at 201-221 (IVLCLLGALLYLVSPLDIIPE) threads the bilayer. Position 222 (Ala-222) is a topological domain, lumenal. A helical membrane pass occupies residues 223–243 (LFGILGFLDDLFVLFLLLIYI). Topologically, residues 244–257 (SIMYREVVTQRLYR) are cytoplasmic.

The protein resides in the endoplasmic reticulum membrane. The catalysed reaction is S-ubiquitinyl-[E2 ubiquitin-conjugating enzyme]-L-cysteine + [acceptor protein]-L-lysine = [E2 ubiquitin-conjugating enzyme]-L-cysteine + N(6)-ubiquitinyl-[acceptor protein]-L-lysine.. The protein operates within protein modification; protein ubiquitination. Functionally, E3 ubiquitin-protein ligase that plays an essential role in stimulus-induced inositol 1,4,5-trisphosphate receptor (ITPR) ubiquitination and degradation via the endoplasmic reticulum-associated degradation (ERAD) pathway. Also involved in ITPR turnover in resting cells. The protein is E3 ubiquitin-protein ligase RNF170 (rnf170) of Xenopus laevis (African clawed frog).